A 310-amino-acid chain; its full sequence is L-lactate dehydrogenase (310 aa).

NAD(+) contacts are provided by residues Val-11, Asp-32, Tyr-62, and Gly-76–Val-77. Residues Gln-79, Arg-85, and Asn-117–Asp-120 contribute to the substrate site. NAD(+)-binding positions include Ala-115 to Asn-117 and Ser-140. Asp-145–Arg-148 lines the substrate pocket. Residues Arg-150 and His-165 each coordinate beta-D-fructose 1,6-bisphosphate. The active-site Proton acceptor is His-172. Thr-227 contributes to the substrate binding site.

This sequence belongs to the LDH/MDH superfamily. LDH family. As to quaternary structure, homotetramer.

It localises to the cytoplasm. It catalyses the reaction (S)-lactate + NAD(+) = pyruvate + NADH + H(+). The protein operates within fermentation; pyruvate fermentation to lactate; (S)-lactate from pyruvate: step 1/1. Allosterically activated by fructose 1,6-bisphosphate (FBP). In terms of biological role, catalyzes the conversion of lactate to pyruvate. This chain is L-lactate dehydrogenase, found in Allorhizobium ampelinum (strain ATCC BAA-846 / DSM 112012 / S4) (Agrobacterium vitis (strain S4)).